The chain runs to 287 residues: Transcription cofactor vestigial-like protein 4 (287 aa).

2 disordered regions span residues 44–68 (ASAL…SMEP) and 251–287 (AAKD…SVVS). Phosphoserine is present on residues S58 and S271. Over residues 275 to 287 (HMVSHSHSPSVVS) the composition is skewed to low complexity.

It belongs to the vestigial family. As to quaternary structure, interacts with TEFs. Interacts with IRF2BP2.

It is found in the nucleus. Its function is as follows. May act as a specific coactivator for the mammalian TEFs. The sequence is that of Transcription cofactor vestigial-like protein 4 (Vgll4) from Mus musculus (Mouse).